Here is a 264-residue protein sequence, read N- to C-terminus: 3-methyl-2-oxobutanoate hydroxymethyltransferase (264 aa).

The Mg(2+) site is built by aspartate 43 and aspartate 82. 3-methyl-2-oxobutanoate contacts are provided by residues 43 to 44, aspartate 82, and lysine 111; that span reads DS. Glutamate 113 provides a ligand contact to Mg(2+). Glutamate 180 functions as the Proton acceptor in the catalytic mechanism.

It belongs to the PanB family. Homodecamer; pentamer of dimers. It depends on Mg(2+) as a cofactor.

Its subcellular location is the cytoplasm. The catalysed reaction is 3-methyl-2-oxobutanoate + (6R)-5,10-methylene-5,6,7,8-tetrahydrofolate + H2O = 2-dehydropantoate + (6S)-5,6,7,8-tetrahydrofolate. It functions in the pathway cofactor biosynthesis; (R)-pantothenate biosynthesis; (R)-pantoate from 3-methyl-2-oxobutanoate: step 1/2. Its function is as follows. Catalyzes the reversible reaction in which hydroxymethyl group from 5,10-methylenetetrahydrofolate is transferred onto alpha-ketoisovalerate to form ketopantoate. The chain is 3-methyl-2-oxobutanoate hydroxymethyltransferase from Campylobacter fetus subsp. fetus (strain 82-40).